Consider the following 585-residue polypeptide: Probable glucomannan 4-beta-mannosyltransferase 7 (585 aa).

The chain crosses the membrane as a helical span at residues 87 to 107 (VIAPTLQVAVWVCMVMSVMLV). The active site involves Asp-188. Asp-247 and Asp-249 together coordinate substrate. The active site involves Asp-341. 4 helical membrane-spanning segments follow: residues 420 to 440 (VVAP…SVMI), 443 to 463 (LFIP…ITTI), 534 to 554 (LPEI…LIFH), and 563 to 583 (LYLQ…NFAC).

Belongs to the glycosyltransferase 2 family. Plant cellulose synthase-like A subfamily.

It localises to the golgi apparatus membrane. The enzyme catalyses GDP-mannose + (glucomannan)n = GDP + (glucomannan)n+1.. In terms of biological role, probable mannan synthase which consists of a 4-beta-mannosyltransferase activity on mannan using GDP-mannose. The beta-1,4-mannan product is the backbone for galactomannan synthesis by galactomannan galactosyltransferase. Galactomannan is a noncellulosic polysaccharides of plant cell wall. The polypeptide is Probable glucomannan 4-beta-mannosyltransferase 7 (Oryza sativa subsp. japonica (Rice)).